Reading from the N-terminus, the 665-residue chain is MCVRRELANAIRMLSIDAVQNAKSGHPGMPMGMADIAEVLWRKFFKHSPTNPNWNNRDRFILSNGHGSMLLYSLLHLTGYDLSIDELKKFRQLHSKTPGHPETGETPGVETTTGPLGQGLANAVGMAIAERTLSAYFNRPDYDIVDHYTWVFVGDGCLMEGISHEVCSLAGTLKLGKLIVFYDKNGISIDGKISNWFTDDTVMRFKSYNWHVVDKVDGHDANSIKNSIEEAKSVKDQPSIIICNTIIGFGSPNKSGTADSHGAPLGEEEIFLTRKNLNWKYSPFEIPNKIYDKWNFVKQGLKLEENWNKQFHLYKSEYPALAEEYSRRIKKKLPTQWYKKTKDYIFNLQKNPQNIATRKASQNAIEEFAALLPELIGGSADLSPSNLTMWSKSSSITENLCGNYIHYGVREFGMTAIANGISHHGGFIPYTSTFLMFVEYARNAVRMAALMNTKHIFVYTHDSIGLGEDGPTHQPIEQLANLRMTPNIDVWRPSDQVETAVAWKYAIEEKNGPTALILSRQNLFQFSRNNEQIKNISYGAYILYDSKKPIDIIFISTGSELQITLTSAKKIAALGYSVRVVSMPSNNVFDRQNIDYKESILPSYITKRIVIEASIKDFWYKYAGSEGLIIGMETFGESASEEVLFKKFGFTVENIVNKSKILLKH.

Histidine 26 is a binding site for substrate. Residues histidine 66 and 114–116 (GPL) each bind thiamine diphosphate. A Mg(2+)-binding site is contributed by aspartate 155. Thiamine diphosphate is bound by residues glycine 156 and asparagine 185. The Mg(2+) site is built by asparagine 185 and isoleucine 187. Histidine 261, arginine 358, and serine 385 together coordinate substrate. Residue histidine 261 coordinates thiamine diphosphate. Catalysis depends on glutamate 411, which acts as the Proton donor. Phenylalanine 437 serves as a coordination point for thiamine diphosphate. Residues histidine 461, aspartate 469, and arginine 520 each coordinate substrate.

Belongs to the transketolase family. In terms of assembly, homodimer. Mg(2+) is required as a cofactor. It depends on Ca(2+) as a cofactor. The cofactor is Mn(2+). Requires Co(2+) as cofactor. Thiamine diphosphate serves as cofactor.

It carries out the reaction D-sedoheptulose 7-phosphate + D-glyceraldehyde 3-phosphate = aldehydo-D-ribose 5-phosphate + D-xylulose 5-phosphate. Functionally, catalyzes the transfer of a two-carbon ketol group from a ketose donor to an aldose acceptor, via a covalent intermediate with the cofactor thiamine pyrophosphate. This chain is Transketolase (tkt), found in Buchnera aphidicola subsp. Schizaphis graminum (strain Sg).